The following is a 155-amino-acid chain: Ribosome maturation factor RimP (155 aa).

This sequence belongs to the RimP family.

The protein resides in the cytoplasm. Required for maturation of 30S ribosomal subunits. This is Ribosome maturation factor RimP from Staphylococcus epidermidis (strain ATCC 35984 / DSM 28319 / BCRC 17069 / CCUG 31568 / BM 3577 / RP62A).